The following is a 79-amino-acid chain: NADH-ubiquinone oxidoreductase chain 4 (79 aa).

2 helical membrane-spanning segments follow: residues 24 to 44 (SYTLMIAHGLCSSGLFCLANI) and 54 to 74 (LLINKGLLNFMPSLSLWWFLL).

Belongs to the complex I subunit 4 family.

It localises to the mitochondrion membrane. It carries out the reaction a ubiquinone + NADH + 5 H(+)(in) = a ubiquinol + NAD(+) + 4 H(+)(out). Functionally, core subunit of the mitochondrial membrane respiratory chain NADH dehydrogenase (Complex I) that is believed to belong to the minimal assembly required for catalysis. Complex I functions in the transfer of electrons from NADH to the respiratory chain. The immediate electron acceptor for the enzyme is believed to be ubiquinone. The sequence is that of NADH-ubiquinone oxidoreductase chain 4 (ND4) from Simulium vittatum (Striped black fly).